The chain runs to 133 residues: Protein FwdD (133 aa).

In Methanocaldococcus jannaschii (strain ATCC 43067 / DSM 2661 / JAL-1 / JCM 10045 / NBRC 100440) (Methanococcus jannaschii), this protein is Protein FwdD (fwdD).